Consider the following 186-residue polypeptide: Tail tubular protein A (186 aa).

Belongs to the tail tubular protein gp11 family.

It is found in the virion. The enzyme catalyses alpha,alpha-trehalose + H2O = alpha-D-glucose + beta-D-glucose. Functionally, structural component of the tail, which functions as a receptor binding protein (RBP) and mediates the attachment to the host capsular exopolysaccharides. Displays a depolymerase activity that specifically degrades the polysaccharides of Klebsiella pneumoniae capsule, which allows the phage to reach the host cell membrane and bind the entry receptor. Hydrolyzes trehalose. The polypeptide is Tail tubular protein A (Klebsiella phage KP34 (Bacteriophage KP34)).